The primary structure comprises 368 residues: Spermidine/putrescine import ATP-binding protein PotA (368 aa).

The ABC transporter domain occupies 6 to 236 (VSIKNVSKFF…PVNVFAATFI (231 aa)). 38-45 (GPSGCGKT) lines the ATP pocket.

The protein belongs to the ABC transporter superfamily. Spermidine/putrescine importer (TC 3.A.1.11.1) family. As to quaternary structure, the complex is composed of two ATP-binding proteins (PotA), two transmembrane proteins (PotB and PotC) and a solute-binding protein (PotD).

The protein resides in the cell inner membrane. The enzyme catalyses ATP + H2O + polyamine-[polyamine-binding protein]Side 1 = ADP + phosphate + polyamineSide 2 + [polyamine-binding protein]Side 1.. Functionally, part of the ABC transporter complex PotABCD involved in spermidine/putrescine import. Responsible for energy coupling to the transport system. The chain is Spermidine/putrescine import ATP-binding protein PotA from Thermotoga maritima (strain ATCC 43589 / DSM 3109 / JCM 10099 / NBRC 100826 / MSB8).